Here is a 312-residue protein sequence, read N- to C-terminus: Zinc transporter ZitB (312 aa).

The next 6 membrane-spanning stretches (helical) occupy residues 16–36 (LLIA…GGWL), 40–60 (LALL…FIAL), 81–101 (LTTL…ILIV), 117–137 (TPML…FWIL), 153–173 (LHVL…IVIL), and 177–197 (WTPI…RNAW).

It belongs to the cation diffusion facilitator (CDF) transporter (TC 2.A.4) family. SLC30A subfamily.

It is found in the cell inner membrane. Functionally, involved in zinc efflux across the cytoplasmic membrane, thus reducing zinc accumulation in the cytoplasm and rendering bacteria more resistant to zinc. It may contribute to zinc homeostasis at low concentrations of zinc. The sequence is that of Zinc transporter ZitB from Yersinia pseudotuberculosis serotype I (strain IP32953).